The chain runs to 532 residues: Cytochrome c oxidase subunit 1 (532 aa).

3 helical membrane passes run 1–21, 27–47, and 69–89; these read MWDYVKLVALGVVAAIAAYAA, LPYMVNMVEVALAAVIALIWV, and GVIATTFWGIVGFLVAVVIAF. Position 114 (His114) interacts with heme b. 8 helical membrane passes run 115–135, 143–163, 185–205, 212–232, 263–283, 296–316, 328–348, and 366–386; these read TSAVIFAFGGNALIASAFYVV, LFGGTALGWFVFWGWQLIIVT, LDILVAVVWVAYLIAFLGTIF, IYVANWFYLSFIVTIAMLHIV, GHNAVGFFLTAGFLGMMYYFV, LSIVHFWALIFLYIWAGPHHL, LGMVMSVILWMPSWGGMINGL, and MMVVSIGFYGMSTFEGPMMSI. Positions 264, 314, and 315 each coordinate Cu cation. Residues His402 and His404 each contribute to the heme b site. 3 helical membrane passes run 403-423, 442-462, and 496-516; these read VHSGALGWNGMITFGMLYFLT, FWLATIGIVLYASAMWVTGIM, and VGGVLYLLGGLIMAYNLWATV.

Belongs to the heme-copper respiratory oxidase family. The cofactor is Cu(2+). Heme b serves as cofactor.

It is found in the cell membrane. The enzyme catalyses 4 Fe(II)-[cytochrome c] + O2 + 8 H(+)(in) = 4 Fe(III)-[cytochrome c] + 2 H2O + 4 H(+)(out). The protein operates within energy metabolism; oxidative phosphorylation. Functionally, cytochrome c oxidase is the component of the respiratory chain that catalyzes the reduction of oxygen to water. Subunits 1-3 form the functional core of the enzyme complex. Co I is the catalytic subunit of the enzyme. Electrons originating in cytochrome c are transferred via the copper A center of subunit 2 and heme a of subunit 1 to the bimetallic center formed by heme a3 and copper B. This cytochrome c oxidase shows proton pump activity across the membrane in addition to the electron transfer. This is Cytochrome c oxidase subunit 1 (ctaD) from Rhodobacter capsulatus (Rhodopseudomonas capsulata).